Consider the following 441-residue polypeptide: Glutamate--tRNA ligase 1 (441 aa).

The 'HIGH' region motif lies at 9 to 19; that stretch reads PSPTGFIHVGN. Residues 239 to 243 carry the 'KMSKS' region motif; that stretch reads ALSKR. K242 provides a ligand contact to ATP.

Belongs to the class-I aminoacyl-tRNA synthetase family. Glutamate--tRNA ligase type 1 subfamily. In terms of assembly, monomer.

Its subcellular location is the cytoplasm. It catalyses the reaction tRNA(Glu) + L-glutamate + ATP = L-glutamyl-tRNA(Glu) + AMP + diphosphate. In terms of biological role, catalyzes the attachment of glutamate to tRNA(Glu) in a two-step reaction: glutamate is first activated by ATP to form Glu-AMP and then transferred to the acceptor end of tRNA(Glu). The polypeptide is Glutamate--tRNA ligase 1 (Cereibacter sphaeroides (strain ATCC 17025 / ATH 2.4.3) (Rhodobacter sphaeroides)).